Consider the following 248-residue polypeptide: Mannose-binding protein C (248 aa).

Residues 1-20 form the signal peptide; sequence MSLFPSLPLLLLSVVAASYS. The 58-residue stretch at 42-99 folds into the Collagen-like domain; that stretch reads GINGFPGKDGRDGTKGEKGEPGQGLRGLQGPPGKLGPPGNPGPSGSPGPKGQKGDPGK. Residues 43-111 form a disordered region; that stretch reads INGFPGKDGR…DCDSSLAASE (69 aa). Position 47 is a 4-hydroxyproline (proline 47). Over residues 49-61 the composition is skewed to basic and acidic residues; that stretch reads KDGRDGTKGEKGE. A 4-hydroxyproline mark is found at proline 73, proline 79, proline 82, and proline 88. Residues 75–87 show a composition bias toward pro residues; it reads KLGPPGNPGPSGS. Over residues 93–102 the composition is skewed to basic and acidic residues; that stretch reads QKGDPGKSPD. The stretch at 112–130 forms a coiled coil; the sequence is RKALQTEMARIKKWLTFSL. The C-type lectin domain occupies 134–245; the sequence is VGNKFFLTNG…CSSSHLAVCE (112 aa). Disulfide bonds link cysteine 155-cysteine 244 and cysteine 222-cysteine 236.

In terms of assembly, oligomeric complex of 3 or more homotrimers. Interacts with MASP1 and MASP2. Interacts with MEP1A and MEP1B and may inhibit their catalytic activity. Hydroxylation on proline residues within the sequence motif, GXPG, is most likely to be 4-hydroxy as this fits the requirement for 4-hydroxylation in vertebrates.

The protein resides in the secreted. Its function is as follows. Calcium-dependent lectin involved in innate immune defense. Binds mannose, fucose and N-acetylglucosamine on different microorganisms and activates the lectin complement pathway. Binds to late apoptotic cells, as well as to apoptotic blebs and to necrotic cells, but not to early apoptotic cells, facilitating their uptake by macrophages. In Pongo pygmaeus (Bornean orangutan), this protein is Mannose-binding protein C (MBL2).